We begin with the raw amino-acid sequence, 100 residues long: Integration host factor subunit alpha (100 aa).

The protein belongs to the bacterial histone-like protein family. As to quaternary structure, heterodimer of an alpha and a beta chain.

This protein is one of the two subunits of integration host factor, a specific DNA-binding protein that functions in genetic recombination as well as in transcriptional and translational control. This chain is Integration host factor subunit alpha, found in Hahella chejuensis (strain KCTC 2396).